An 898-amino-acid polypeptide reads, in one-letter code: Conserved oligomeric Golgi complex subunit 5 (898 aa).

The tract at residues 1 to 30 (MNNNNNNNEGVSSSSSSSSSPLPNISSPNL) is disordered. Residues 129-192 (DTLKLGVSNL…VKKLKNHLQA (64 aa)) adopt a coiled-coil conformation. Disordered stretches follow at residues 311 to 339 (NNNN…NNNN), 519 to 551 (SNNS…SSTT), and 679 to 705 (STGG…SKPT). The span at 679-702 (STGGVNNNSNSNNNNEIITINENS) shows a compositional bias: low complexity.

The protein localises to the golgi apparatus membrane. The polypeptide is Conserved oligomeric Golgi complex subunit 5 (cog5) (Dictyostelium discoideum (Social amoeba)).